We begin with the raw amino-acid sequence, 163 residues long: Disulfide bond formation protein B 1 (163 aa).

Over 1–9 (MPLASPRQL) the chain is Cytoplasmic. Residues 10 to 26 (FLLAFLACVAIMGGALY) form a helical membrane-spanning segment. Topologically, residues 27–44 (LEHVVGLEACPLCVVQRI) are periplasmic. An intrachain disulfide couples Cys36 to Cys39. The chain crosses the membrane as a helical span at residues 45-61 (FFILIGLTCLAGAIQGP). Over 62–67 (GLRGRR) the chain is Cytoplasmic. The chain crosses the membrane as a helical span at residues 68 to 85 (IYSVLVFLLALGGGATAA). Residues 86–142 (RQVWLQTVPLDQLPACLPSLDYMMQALPFQEVIRLVLHGTADCAQVSWTLFTLSIPE) lie on the Periplasmic side of the membrane. Cys101 and Cys128 are joined by a disulfide. A helical transmembrane segment spans residues 143–161 (WSLLAFVAYLGFSIVQFLR). Residues 162–163 (RA) are Cytoplasmic-facing.

Belongs to the DsbB family.

Its subcellular location is the cell inner membrane. Functionally, required for disulfide bond formation in some periplasmic proteins. Acts by oxidizing the DsbA protein. This chain is Disulfide bond formation protein B 1 (dsbB1), found in Pseudomonas aeruginosa (strain ATCC 15692 / DSM 22644 / CIP 104116 / JCM 14847 / LMG 12228 / 1C / PRS 101 / PAO1).